The chain runs to 931 residues: MRVKDTLNLGKTKFPMRGNLPKREAEWEKNWEDQKFYERRLKLNEGHERFDLHDGPPFANGNIHMGHALNKITKDIIVRSKNMEGYYAPYVPGWDTHGLPIEQQLTKQGVDRKTMDRAAYRELCRKFAMEQVEKQRTDFKRLGVMGDWDHPYITLLPEFEAAEIRVFGKMYENGYIYQGKKPVYWSWSSESTLAEAEVEYHDVESPSIYISFPVKDGKGKLSEENTYFLIWTTTPWTIPSNQGIAVNPKFDYSVVEVGDRRYVVGTDRLSAVAEILGWDSYKTVQHLKGTDMEYMVAKHPYIEGRDSLLMEAVYVTDDDGTGLVHTASGFGEDDYNTAMRYGFDVLSPMDNKGCFTEEIPDPDLVGKFYTDTNEIVKDKLSAAGNLLHYSTFVHSAAHDWRTKKPVVYRATTQWFASISKFRDQILDQIEKTTFYPAWGKTRLYNMIKDRGDWVISRQRAWGVPLPIFYAEDGTAIVTHETIEHVADLFAKEGSNAWFTHPVEELLPEGFTSEHSPNGKFTKETDILDVWFDSGSSWSGVQALGRAVHYPTSMYLEGSDQYRGWFNSSLITSVATNGVAPYKSVLSQGFTLDGQGRKMSKSLGNTIAPNDVIKQMGAEIIRLWVASVDASGDVGVSMDILRQVSEGYRKIRNTFRYMLANTADFDPEKDRVAYKDLCKIDQYLEVKLNDLVAESIVNYDKYDFADVYKLVFKFITNDLSAFYLDFAKDVLYIEGKDSHARRSMQTVIYDAAVKLAKILAPILPHTMGEVWGYLKEKEEDVYLSNFPEIEDYADADDLKESWGEFMKLRDDVLKALEEARDQKLIGKSFEASVTVYPGEAAKAALDKLAGEDFREILIVSNLVMGQGEVPAEAKQFDQASVLVRRAEGEVCPRCRMYRTDLGADSRLPQLCGRCASIVAGDHPEILEEGLED.

The short motif at 57 to 67 (PFANGNIHMGH) is the 'HIGH' region element. An L-isoleucyl-5'-AMP-binding site is contributed by E556. Positions 597–601 (KMSKS) match the 'KMSKS' region motif. Position 600 (K600) interacts with ATP. 4 residues coordinate Zn(2+): C890, C893, C910, and C913.

This sequence belongs to the class-I aminoacyl-tRNA synthetase family. IleS type 1 subfamily. As to quaternary structure, monomer. Requires Zn(2+) as cofactor.

The protein resides in the cytoplasm. The enzyme catalyses tRNA(Ile) + L-isoleucine + ATP = L-isoleucyl-tRNA(Ile) + AMP + diphosphate. In terms of biological role, catalyzes the attachment of isoleucine to tRNA(Ile). As IleRS can inadvertently accommodate and process structurally similar amino acids such as valine, to avoid such errors it has two additional distinct tRNA(Ile)-dependent editing activities. One activity is designated as 'pretransfer' editing and involves the hydrolysis of activated Val-AMP. The other activity is designated 'posttransfer' editing and involves deacylation of mischarged Val-tRNA(Ile). The polypeptide is Isoleucine--tRNA ligase (Lactobacillus delbrueckii subsp. bulgaricus (strain ATCC 11842 / DSM 20081 / BCRC 10696 / JCM 1002 / NBRC 13953 / NCIMB 11778 / NCTC 12712 / WDCM 00102 / Lb 14)).